A 318-amino-acid polypeptide reads, in one-letter code: NADH-ubiquinone oxidoreductase chain 1 (318 aa).

8 consecutive transmembrane segments (helical) span residues 2 to 22, 70 to 90, 100 to 120, 140 to 160, 172 to 192, 217 to 237, 253 to 273, and 294 to 314; these read FLVNLLLMIIPILLAVAFLTL, MFIMAPILALSLALTMWTPLP, LGVLFILAMSSLAVYSILWSG, ISYEVTLAIILLSVLLMSGSF, LWLIIPAWPLAMMWFISTLAE, GGSFALFFLAEYANIIMMNAI, EFYTTSFMIKTLLMTITFLWI, and LPLTLALCMWHVSIPILTASI.

It belongs to the complex I subunit 1 family. As to quaternary structure, core subunit of respiratory chain NADH dehydrogenase (Complex I) which is composed of 45 different subunits.

It localises to the mitochondrion inner membrane. It catalyses the reaction a ubiquinone + NADH + 5 H(+)(in) = a ubiquinol + NAD(+) + 4 H(+)(out). In terms of biological role, core subunit of the mitochondrial membrane respiratory chain NADH dehydrogenase (Complex I) which catalyzes electron transfer from NADH through the respiratory chain, using ubiquinone as an electron acceptor. Essential for the catalytic activity and assembly of complex I. This is NADH-ubiquinone oxidoreductase chain 1 (MT-ND1) from Emballonura alecto (Philippine sheath-tailed bat).